A 188-amino-acid chain; its full sequence is Glandular kallikrein-3, submandibular (188 aa).

In terms of domain architecture, Peptidase S1 spans 1–185 (NYHVLLGQNN…FTSWIKEVMK (185 aa)). Asn-10 and Asn-36 each carry an N-linked (GlcNAc...) asparagine glycan. Residue Asp-47 is the Charge relay system of the active site. 3 disulfides stabilise this stretch: Cys-79–Cys-146, Cys-111–Cys-125, and Cys-136–Cys-161. Ser-140 serves as the catalytic Charge relay system.

The protein belongs to the peptidase S1 family. Kallikrein subfamily.

The catalysed reaction is Preferential cleavage of Arg-|-Xaa bonds in small molecule substrates. Highly selective action to release kallidin (lysyl-bradykinin) from kininogen involves hydrolysis of Met-|-Xaa or Leu-|-Xaa.. Its function is as follows. Glandular kallikreins cleave Met-Lys and Arg-Ser bonds in kininogen to release Lys-bradykinin. The protein is Glandular kallikrein-3, submandibular (Klk3) of Rattus norvegicus (Rat).